A 447-amino-acid polypeptide reads, in one-letter code: Alpha-1,3-mannosyl-glycoprotein 2-beta-N-acetylglucosaminyltransferase (447 aa).

Residues 1–6 (MLKKQS) are Cytoplasmic-facing. A helical; Signal-anchor for type II membrane protein membrane pass occupies residues 7–29 (AGLVLWGAIIFVGWNALLLLFFW). The Lumenal segment spans residues 30–447 (TRPAPGRLPS…TWNGYDPSWN (418 aa)). Cysteines 115 and 145 form a disulfide. The substrate site is built by Arg-117, Asp-144, His-190, and Asp-212. Asp-213 serves as a coordination point for Mn(2+). The cysteines at positions 239 and 305 are disulfide-linked. Asp-291 (proton acceptor) is an active-site residue. A substrate-binding site is contributed by Ser-322.

The protein belongs to the glycosyltransferase 13 family. In terms of assembly, interacts with MGAT4D. Interacts with BRI3. Mn(2+) serves as cofactor. Appears to be present in all tissues.

It localises to the golgi apparatus membrane. Its subcellular location is the cytoplasm. It is found in the perinuclear region. It catalyses the reaction N(4)-(alpha-D-Man-(1-&gt;3)-[alpha-D-Man-(1-&gt;3)-[alpha-D-Man-(1-&gt;6)]-alpha-D-Man-(1-&gt;6)]-beta-D-Man-(1-&gt;4)-beta-D-GlcNAc-(1-&gt;4)-beta-D-GlcNAc)-L-asparaginyl-[protein] (N-glucan mannose isomer 5A1,2) + UDP-N-acetyl-alpha-D-glucosamine = N(4)-{beta-D-GlcNAc-(1-&gt;2)-alpha-D-Man-(1-&gt;3)-[alpha-D-Man-(1-&gt;3)-[alpha-D-Man-(1-&gt;6)]-alpha-D-Man-(1-&gt;6)]-beta-D-Man-(1-&gt;4)-beta-D-GlcNAc-(1-&gt;4)-beta-D-GlcNAc}-L-asparaginyl-[protein] + UDP + H(+). The protein operates within protein modification; protein glycosylation. In terms of biological role, initiates complex N-linked carbohydrate formation. Essential for the conversion of high-mannose to hybrid and complex N-glycans. The chain is Alpha-1,3-mannosyl-glycoprotein 2-beta-N-acetylglucosaminyltransferase (Mgat1) from Rattus norvegicus (Rat).